The sequence spans 423 residues: Exodeoxyribonuclease 7 large subunit (423 aa).

The protein belongs to the XseA family. Heterooligomer composed of large and small subunits.

It localises to the cytoplasm. It catalyses the reaction Exonucleolytic cleavage in either 5'- to 3'- or 3'- to 5'-direction to yield nucleoside 5'-phosphates.. Bidirectionally degrades single-stranded DNA into large acid-insoluble oligonucleotides, which are then degraded further into small acid-soluble oligonucleotides. The sequence is that of Exodeoxyribonuclease 7 large subunit from Natranaerobius thermophilus (strain ATCC BAA-1301 / DSM 18059 / JW/NM-WN-LF).